The chain runs to 470 residues: ATP synthase subunit beta 2 (470 aa).

155–162 (GGAGVGKT) is an ATP binding site.

It belongs to the ATPase alpha/beta chains family. As to quaternary structure, F-type ATPases have 2 components, CF(1) - the catalytic core - and CF(0) - the membrane proton channel. CF(1) has five subunits: alpha(3), beta(3), gamma(1), delta(1), epsilon(1). CF(0) has three main subunits: a(1), b(2) and c(9-12). The alpha and beta chains form an alternating ring which encloses part of the gamma chain. CF(1) is attached to CF(0) by a central stalk formed by the gamma and epsilon chains, while a peripheral stalk is formed by the delta and b chains.

It localises to the cell inner membrane. It carries out the reaction ATP + H2O + 4 H(+)(in) = ADP + phosphate + 5 H(+)(out). Its function is as follows. Produces ATP from ADP in the presence of a proton gradient across the membrane. The catalytic sites are hosted primarily by the beta subunits. This is ATP synthase subunit beta 2 from Nitrosospira multiformis (strain ATCC 25196 / NCIMB 11849 / C 71).